The primary structure comprises 292 residues: AKT-interacting protein (292 aa).

The disordered stretch occupies residues 1-63 (MNPLWSMSAG…TSPAPAAQST (63 aa)). Residues 14 to 23 (KRAEGEEKTL) are compositionally biased toward basic and acidic residues. Residue S30 is modified to Phosphoserine. In terms of domain architecture, UBC core spans 74–222 (YLEYSLLAEF…VVDSVKVCTA (149 aa)).

The protein belongs to the ubiquitin-conjugating enzyme family. FTS subfamily. As to quaternary structure, component of the FTS/Hook/FHIP complex (FHF complex), composed of AKTIP/FTS, FHIP1B, and one or more members of the Hook family of proteins HOOK1, HOOK2, and HOOK3. Interacts directly with HOOK1, HOOK2 and HOOK3. The FHF complex associates with the homotypic vesicular sorting complex (the HOPS complex). Also interacts with AKT1. May interact with FHIP1A. As to expression, ubiquitous. Highest expression in kidney, testis and brain and lowest in spleen and liver.

It localises to the cytoplasm. It is found in the cell membrane. In terms of biological role, component of the FTS/Hook/FHIP complex (FHF complex). The FHF complex may function to promote vesicle trafficking and/or fusion via the homotypic vesicular protein sorting complex (the HOPS complex). Regulates apoptosis by enhancing phosphorylation and activation of AKT1. Increases release of TNFSF6 via the AKT1/GSK3B/NFATC1 signaling cascade. FHF complex promotes the distribution of AP-4 complex to the perinuclear area of the cell. This is AKT-interacting protein (Aktip) from Mus musculus (Mouse).